The primary structure comprises 345 residues: Protein D345L (345 aa).

This sequence belongs to the asfivirus D345L family. In terms of assembly, interacts with IKKA/CHUK and IKBKB.

Its subcellular location is the host cytoplasm. Its function is as follows. Plays a role in the negative regulation of host NF-kappa-B signaling pathway. Mechanistically, recruits host IKKA/CHUK and IKBKB to suppress their kinase activity towards NFKBIA. The protein is Protein D345L of African swine fever virus (strain Badajoz 1971 Vero-adapted) (Ba71V).